The following is a 412-amino-acid chain: Phosphoglycerate kinase (412 aa).

Substrate contacts are provided by residues 26–28 (DFN), R42, 65–68 (HLGR), R133, and R166. ATP contacts are provided by residues K217, G308, E339, and 368–371 (GGDS).

The protein belongs to the phosphoglycerate kinase family. In terms of assembly, monomer.

Its subcellular location is the cytoplasm. The catalysed reaction is (2R)-3-phosphoglycerate + ATP = (2R)-3-phospho-glyceroyl phosphate + ADP. Its pathway is carbohydrate degradation; glycolysis; pyruvate from D-glyceraldehyde 3-phosphate: step 2/5. In Synechococcus sp. (strain JA-3-3Ab) (Cyanobacteria bacterium Yellowstone A-Prime), this protein is Phosphoglycerate kinase.